Consider the following 413-residue polypeptide: Alpha-1-antitrypsin 1-5 (413 aa).

An N-terminal signal peptide occupies residues 1 to 24; sequence MTPSISWCLLLLAGLCCLVPSFLA. Residues Asn64, Asn101, and Asn265 are each glycosylated (N-linked (GlcNAc...) asparagine). The segment at 368–387 is RCL; sequence AATVLQGGFLSMPPILHFNR.

The protein belongs to the serpin family.

It is found in the secreted. Its function is as follows. Does not inhibit elastase or chymotrypsin. No target protease has been identified to date. The protein is Alpha-1-antitrypsin 1-5 (Serpina1e) of Mus musculus (Mouse).